Reading from the N-terminus, the 659-residue chain is L-type lectin-domain containing receptor kinase V.7 (659 aa).

The signal sequence occupies residues 1–25 (MSHKVLQIVLVLLLTLFSSTHNSNG). The tract at residues 22–244 (NSNGNFLMEE…GALYYVMQFS (223 aa)) is legume-lectin like. Over 26 to 275 (NFLMEEAAAA…PKKSYDRTRR (250 aa)) the chain is Extracellular. Residues Asn45, Asn64, Asn110, and Asn192 are each glycosylated (N-linked (GlcNAc...) asparagine). A helical membrane pass occupies residues 276–296 (ILAVCLTLAVFTALVASGIGF). The Cytoplasmic portion of the chain corresponds to 297-659 (VFYVRHKKVK…LTNSFVSHGR (363 aa)). One can recognise a Protein kinase domain in the interval 333-595 (FKEKQLLGKG…GLLCAHHTEL (263 aa)). ATP contacts are provided by residues 339–347 (LGKGGFGQV) and Lys362. Catalysis depends on Asp462, which acts as the Proton acceptor.

In the C-terminal section; belongs to the protein kinase superfamily. Ser/Thr protein kinase family. It in the N-terminal section; belongs to the leguminous lectin family.

Its subcellular location is the cell membrane. It catalyses the reaction L-seryl-[protein] + ATP = O-phospho-L-seryl-[protein] + ADP + H(+). It carries out the reaction L-threonyl-[protein] + ATP = O-phospho-L-threonyl-[protein] + ADP + H(+). In terms of biological role, involved in resistance response to the pathogenic oomycetes Phytophthora infestans and Phytophthora capsici and to the pathogenic bacteria Pseudomonas syringae. The chain is L-type lectin-domain containing receptor kinase V.7 from Arabidopsis thaliana (Mouse-ear cress).